An 892-amino-acid polypeptide reads, in one-letter code: Putative leucine-rich repeat receptor-like serine/threonine-protein kinase At2g04300 (892 aa).

The N-terminal stretch at 1–26 (MKTHPQAILLCVLFFITFGLLHVVEA) is a signal peptide. Topologically, residues 27 to 523 (GNQEGFISLD…GAKKKNVVVL (497 aa)) are extracellular. N-linked (GlcNAc...) asparagine glycosylation is found at asparagine 99, asparagine 186, asparagine 241, asparagine 267, and asparagine 294. LRR repeat units follow at residues 375–396 (IKNIQNTYGVSKTSWQGDPCVP), 399–422 (FMWDGLNCNNSYISTPPTITFLNL), 423–444 (SSSHLTGIIASAIQNLTHLQNL), and 447–467 (SNNNLTGGVPEFLAGLKSLLV). N-linked (GlcNAc...) asparagine glycosylation is found at asparagine 407, asparagine 421, asparagine 437, asparagine 450, and asparagine 469. The chain crosses the membrane as a helical span at residues 524–544 (VVVSIALVVVLGSALALFLVF). Residues 545-892 (RKRKTPRNEV…FGTEYTPEAR (348 aa)) lie on the Cytoplasmic side of the membrane. Threonine 573 carries the post-translational modification Phosphothreonine. Positions 582-855 (NNFEKILGKG…QVVIELNECL (274 aa)) constitute a Protein kinase domain. ATP-binding positions include 588–596 (LGKGGFGMV) and lysine 610. Tyrosine 655 is modified (phosphotyrosine). Aspartate 707 acts as the Proton acceptor in catalysis. A phosphothreonine mark is found at threonine 742 and threonine 747. The residue at position 755 (tyrosine 755) is a Phosphotyrosine.

This sequence belongs to the protein kinase superfamily. Ser/Thr protein kinase family.

It is found in the cell membrane. It catalyses the reaction L-seryl-[protein] + ATP = O-phospho-L-seryl-[protein] + ADP + H(+). The enzyme catalyses L-threonyl-[protein] + ATP = O-phospho-L-threonyl-[protein] + ADP + H(+). The polypeptide is Putative leucine-rich repeat receptor-like serine/threonine-protein kinase At2g04300 (Arabidopsis thaliana (Mouse-ear cress)).